The following is a 215-amino-acid chain: Ras-related protein SEC4 (215 aa).

GTP is bound at residue 27 to 34; that stretch reads GDSGVGKS. Residues 49 to 57 carry the Effector region motif; sequence FITTIGIDF. GTP is bound by residues 75–79 and 133–136; these read DTAGQ and NKSD. Ser-201 and Ser-204 each carry phosphoserine. 2 S-geranylgeranyl cysteine lipidation sites follow: Cys-214 and Cys-215.

Belongs to the small GTPase superfamily. Rab family. In terms of assembly, interacts with the guanyl-nucleotide exchange factor SEC2. Interacts with SRO7, YIF1, YIP3, YIP4 and YIP5.

It is found in the cytoplasmic vesicle. It localises to the secretory vesicle membrane. Its subcellular location is the cell membrane. The protein localises to the cytoplasm. Involved in exocytosis. Maybe by regulating the binding and fusion of secretory vesicles with the cell surface. The GTP-bound form of SEC4 may interact with an effector, thereby stimulating its activity and leading to exocytotic fusion. SEC4 may be an upstream activator of the 19.5S SEC8/SEC15 particle. SEC4 probably interacts directly with SEC8; it could serve as the attachment site for the SEC8/SEC15 particle. This chain is Ras-related protein SEC4 (SEC4), found in Saccharomyces cerevisiae (strain ATCC 204508 / S288c) (Baker's yeast).